Here is a 1171-residue protein sequence, read N- to C-terminus: 7,8-linoleate diol synthase (1171 aa).

The segment covering 1–22 (MASSSSSGSSTRSSSPSDPPSS) has biased composition (low complexity). Residues 1-56 (MASSSSSGSSTRSSSPSDPPSSFFQKLGAFLGLFSKPQPPRPDYPHAPGNSAREEQ) form a disordered region. The segment at 114-457 (TDGLITGLWE…DGSFEDEGLI (344 aa)) is fatty acid alpha-dioxygenase. Position 213 (H213) interacts with heme b. Residues D214, S229, Y231, D233, and S235 each coordinate Ca(2+). Y385 is an active-site residue. A heme b-binding site is contributed by H388. The segment at 675–1171 (KILNNQKDFK…PMNMKIRWDD (497 aa)) is epoxy alcohol synthase. Residues 873–900 (GLANGGANGHANGNANGHTNGNGIHQNG) form a disordered region. Positions 881-895 (GHANGNANGHTNGNG) are enriched in low complexity. C1089 lines the heme pocket.

This sequence in the N-terminal section; belongs to the peroxidase family. The protein in the C-terminal section; belongs to the cytochrome P450 family. As to quaternary structure, homotetramer. It depends on heme b as a cofactor. Ca(2+) is required as a cofactor. The cofactor is heme.

The catalysed reaction is (9Z,12Z)-octadecadienoate + O2 = (8R,9Z,12Z)-8-hydroperoxyoctadeca-9,12-dienoate. The enzyme catalyses (8R,9Z,12Z)-8-hydroperoxyoctadeca-9,12-dienoate = (7S,8S,9Z,12Z)-7,8-dihydroxyoctadeca-9,12-dienoate. 7,8-linoleate diol synthase is a bifunctional enzyme that converts linoleic acid (18:2n-6) into 8-hydroperoxy-8(E),12(Z)-octadecadienoic acid (8-HPODE) and then catalyzes the isomerization of the resulting hydroperoxide to 7,8-dihydroxy-9(Z),12(Z)-octadecadienoic acid (7,8-DiHODE). The sequence is that of 7,8-linoleate diol synthase from Pyricularia oryzae (strain 70-15 / ATCC MYA-4617 / FGSC 8958) (Rice blast fungus).